A 279-amino-acid chain; its full sequence is Protein NipSnap homolog 1 (279 aa).

It belongs to the NipSnap family.

The protein resides in the mitochondrion matrix. In terms of biological role, protein involved in mitophagy. Accumulates on the mitochondria surface in response to mitochondrial depolarization and acts as a 'eat me' signal by recruiting proteins involved in selective autophagy. The sequence is that of Protein NipSnap homolog 1 from Danio rerio (Zebrafish).